Reading from the N-terminus, the 297-residue chain is Formylmethanofuran--tetrahydromethanopterin formyltransferase (297 aa).

It belongs to the FTR family. As to quaternary structure, homotetramer.

The protein resides in the cytoplasm. It carries out the reaction N-formylmethanofuran + 5,6,7,8-tetrahydromethanopterin + H(+) = N(5)-formyl-5,6,7,8-tetrahydromethanopterin + methanofuran. Its pathway is one-carbon metabolism; methanogenesis from CO(2); 5,10-methenyl-5,6,7,8-tetrahydromethanopterin from CO(2): step 2/3. Its function is as follows. Catalyzes the reversible transfer of a formyl group from formylmethanofuran (formyl-MFR) to tetrahydromethanopterin (H(4)MPT) to produce 5-formyl tetrahydromethanopterin (5-formyl-H(4)MPT) and methanofuran (MFR). In Methanococcoides burtonii (strain DSM 6242 / NBRC 107633 / OCM 468 / ACE-M), this protein is Formylmethanofuran--tetrahydromethanopterin formyltransferase.